The following is a 160-amino-acid chain: SUMO-conjugating enzyme SCE1 (160 aa).

Ala-2 carries the post-translational modification N-acetylalanine. The 154-residue stretch at 5 to 158 folds into the UBC core domain; that stretch reads IARGRLAEER…VKLQSKQYPA (154 aa). Cys-94 serves as the catalytic Glycyl thioester intermediate.

Belongs to the ubiquitin-conjugating enzyme family. In terms of assembly, interacts with SIZ1 (via PHD domain) and MMS21. Interacts with TCP14 and TCP15. Interacts with KIN10.

Its pathway is protein modification; protein sumoylation. In terms of biological role, SUMO-conjugating enzyme that accepts the SUMO proteins from the E1 SUMO-activating heterodimer SAE1/SAE2 and catalyzes its covalent attachment to other proteins with the E3 SUMO ligases SIZ1 and MMS21. Associates with SIZ1 for sumoylation of the transcription factor GTE3. The chain is SUMO-conjugating enzyme SCE1 (SCE1) from Arabidopsis thaliana (Mouse-ear cress).